We begin with the raw amino-acid sequence, 64 residues long: Large ribosomal subunit protein bL35 (64 aa).

It belongs to the bacterial ribosomal protein bL35 family.

This chain is Large ribosomal subunit protein bL35, found in Shewanella putrefaciens (strain CN-32 / ATCC BAA-453).